Here is a 156-residue protein sequence, read N- to C-terminus: Small ribosomal subunit protein uS7 (156 aa).

This sequence belongs to the universal ribosomal protein uS7 family. Part of the 30S ribosomal subunit. Contacts proteins S9 and S11.

Functionally, one of the primary rRNA binding proteins, it binds directly to 16S rRNA where it nucleates assembly of the head domain of the 30S subunit. Is located at the subunit interface close to the decoding center, probably blocks exit of the E-site tRNA. This chain is Small ribosomal subunit protein uS7, found in Mycolicibacterium gilvum (strain PYR-GCK) (Mycobacterium gilvum (strain PYR-GCK)).